The chain runs to 57 residues: Large ribosomal subunit protein bL32 (57 aa).

The tract at residues Met1–Asp20 is disordered. Residues Arg7–Ser18 show a composition bias toward basic residues.

It belongs to the bacterial ribosomal protein bL32 family.

The polypeptide is Large ribosomal subunit protein bL32 (rpmF) (Mycoplasma genitalium (strain ATCC 33530 / DSM 19775 / NCTC 10195 / G37) (Mycoplasmoides genitalium)).